A 175-amino-acid chain; its full sequence is Ribulose bisphosphate carboxylase small subunit, chloroplastic 2 (175 aa).

The transit peptide at 1–46 directs the protein to the chloroplast; that stretch reads MAPTVMASSATSVAPFQGLKSTAGLPVSRRSTNSGFGNVSNGGRIK.

Belongs to the RuBisCO small chain family. In terms of assembly, heterohexadecamer of 8 large and 8 small subunits.

The protein localises to the plastid. It is found in the chloroplast. In terms of biological role, ruBisCO catalyzes two reactions: the carboxylation of D-ribulose 1,5-bisphosphate, the primary event in carbon dioxide fixation, as well as the oxidative fragmentation of the pentose substrate. Both reactions occur simultaneously and in competition at the same active site. Although the small subunit is not catalytic it is essential for maximal activity. This chain is Ribulose bisphosphate carboxylase small subunit, chloroplastic 2, found in Oryza sativa subsp. japonica (Rice).